The sequence spans 57 residues: Large ribosomal subunit protein bL33 (57 aa).

This sequence belongs to the bacterial ribosomal protein bL33 family.

In Shewanella halifaxensis (strain HAW-EB4), this protein is Large ribosomal subunit protein bL33.